The chain runs to 341 residues: L-threonine 3-dehydrogenase (341 aa).

Cysteine 38 is a Zn(2+) binding site. Catalysis depends on charge relay system residues threonine 40 and histidine 43. Zn(2+)-binding residues include histidine 63, glutamate 64, cysteine 93, cysteine 96, cysteine 99, and cysteine 107. NAD(+) contacts are provided by residues isoleucine 175, aspartate 195, arginine 200, 262–264, and 286–287; these read LGI and IY.

Belongs to the zinc-containing alcohol dehydrogenase family. Homotetramer. Zn(2+) is required as a cofactor.

It is found in the cytoplasm. The catalysed reaction is L-threonine + NAD(+) = (2S)-2-amino-3-oxobutanoate + NADH + H(+). It functions in the pathway amino-acid degradation; L-threonine degradation via oxydo-reductase pathway; glycine from L-threonine: step 1/2. Functionally, catalyzes the NAD(+)-dependent oxidation of L-threonine to 2-amino-3-ketobutyrate. This is L-threonine 3-dehydrogenase from Idiomarina loihiensis (strain ATCC BAA-735 / DSM 15497 / L2-TR).